The sequence spans 665 residues: Envelope glycoprotein (665 aa).

The first 31 residues, 1-31, serve as a signal peptide directing secretion; the sequence is MESTTLSKPFKNQVNPWGPLIVLLILGRVNP. The tract at residues 32 to 267 is receptor-binding domain (RBD); the sequence is VALGNSPHQV…KITDSGPRVP (236 aa). Over 32–605 the chain is Extracellular; the sequence is VALGNSPHQV…FNGSPWFTTL (574 aa). N43 is a glycosylation site (N-linked (GlcNAc...) asparagine; by host). 5 cysteine pairs are disulfide-bonded: C77/C129, C103/C118, C104/C114, C152/C172, and C164/C177. D117 is a Zn(2+) binding site. Residues N199 and N211 are each glycosylated (N-linked (GlcNAc...) asparagine; by host). C209 and C215 are disulfide-bonded. Residues 266-307 form a disordered region; the sequence is VPIGPNPVLSDQRPPSQPRSPPHSNSTPTETPLTLPEPPPAG. N-linked (GlcNAc...) asparagine; by host glycosylation occurs at N324. 6 disulfide bridges follow: C334–C337, C334–C558, C364–C418, C383–C395, C425–C438, and C550–C557. The CXXC motif lies at 334-337; sequence CWLC. N-linked (GlcNAc...) asparagine; by host glycans are attached at residues N356 and N363. 3 N-linked (GlcNAc...) asparagine; by host glycosylation sites follow: N396, N400, and N432. Positions 470-490 are fusion peptide; it reads VSLTLALLLGGLTMGGIAAGV. Residues 505-532 adopt a coiled-coil conformation; sequence AAVHDDLKEVEKSITNLEKSLTSLSEVV. An immunosuppression region spans residues 533 to 549; the sequence is LQNRRGLDLLFLKEGGL. The CX6CC signature appears at 550–558; it reads CAALKEECC. Residues 606-626 form a helical membrane-spanning segment; that stretch reads ISTIMGPLIVLLLILLLGPCI. C625 is lipidated: S-palmitoyl cysteine; by host. Residues 627-665 are Cytoplasmic-facing; it reads LNRLVQFVKDRISVVQALVLTQQYHQLKSIDPEEMESRE. A YXXL motif; contains endocytosis signal motif is present at residues 650–653; sequence YHQL.

In terms of assembly, the mature envelope protein (Env) consists of a trimer of SU-TM heterodimers attached by a labile interchain disulfide bond. Post-translationally, specific enzymatic cleavages in vivo yield mature proteins. Envelope glycoproteins are synthesized as an inactive precursor that is N-glycosylated and processed likely by host cell furin or by a furin-like protease in the Golgi to yield the mature SU and TM proteins. The cleavage site between SU and TM requires the minimal sequence [KR]-X-[KR]-R. The R-peptide is released from the C-terminus of the cytoplasmic tail of the TM protein upon particle formation as a result of proteolytic cleavage by the viral protease. Cleavage of this peptide is required for TM to become fusogenic. In terms of processing, the CXXC motif is highly conserved across a broad range of retroviral envelope proteins. It is thought to participate in the formation of a labile disulfide bond possibly with the CX6CC motif present in the transmembrane protein. Isomerization of the intersubunit disulfide bond to an SU intrachain disulfide bond is thought to occur upon receptor recognition in order to allow membrane fusion. The transmembrane protein is palmitoylated. Post-translationally, the R-peptide is palmitoylated.

It is found in the virion membrane. Its subcellular location is the host cell membrane. In terms of biological role, the surface protein (SU) attaches the virus to the host cell by binding to its receptor. This interaction triggers the refolding of the transmembrane protein (TM) and is thought to activate its fusogenic potential by unmasking its fusion peptide. Fusion occurs at the host cell plasma membrane. Functionally, the transmembrane protein (TM) acts as a class I viral fusion protein. Under the current model, the protein has at least 3 conformational states: pre-fusion native state, pre-hairpin intermediate state, and post-fusion hairpin state. During viral and target cell membrane fusion, the coiled coil regions (heptad repeats) assume a trimer-of-hairpins structure, positioning the fusion peptide in close proximity to the C-terminal region of the ectodomain. The formation of this structure appears to drive apposition and subsequent fusion of viral and target cell membranes. Membranes fusion leads to delivery of the nucleocapsid into the cytoplasm. The protein is Envelope glycoprotein (env) of Mus musculus (Mouse).